The primary structure comprises 270 residues: 4-hydroxy-4-methyl-2-oxoglutarate aldolase tasA (270 aa).

H49 acts as the Proton acceptor in catalysis. Residues E156 and D182 each contribute to the a divalent metal cation site. D182 lines the substrate pocket.

This sequence belongs to the HpcH/HpaI aldolase family. As to quaternary structure, homohexamer; trimer of dimers. Co(2+) is required as a cofactor. Requires Mn(2+) as cofactor. The cofactor is Zn(2+). Fe(2+) serves as cofactor. It depends on Mg(2+) as a cofactor.

The catalysed reaction is 4-hydroxy-4-methyl-2-oxoglutarate = 2 pyruvate. It participates in secondary metabolite biosynthesis. Functionally, 4-hydroxy-4-methyl-2-oxoglutarate aldolase; part of the gene cluster that mediates the biosynthesis of the tetramic acids Sch210971 and Sch210972, potential anti-HIV fungal natural product that contain a decalin core. The PKS module of tasS together with the enoylreductase tasC catalyze the formation of the polyketide unit which is then conjugated to 4-hydroxyl-4-methyl glutamate (HMG) by the condensation domain of the tasS NRPS module. One unique structural feature of Sch210971 and Sch210972 is the tetramic acid motif proposed to be derived from the non-proteinogenic amino acid HMG, by a Dieckmann-type condensation catalyzed by the reductase domain of tasS. The aldolase tasA catalyzes the aldol condensation of 2 molecules of pyruvic acid to yield the intermediate 4-hydroxyl-4-methyl-2-oxoglutarate (HMOG), which can then be stereoselectively transaminated, may be by tasG, to form HMG. The Diels-Alderase tas3 then uses the Dieckmann product of tasS as substrate and catalyzes the Diels-Alder cycloaddition to form the decalin ring of Sch210971 and Sch210972. The sequence is that of 4-hydroxy-4-methyl-2-oxoglutarate aldolase tasA from Hapsidospora irregularis.